A 390-amino-acid polypeptide reads, in one-letter code: Alanine racemase (390 aa).

Lysine 37 serves as the catalytic Proton acceptor; specific for D-alanine. At lysine 37 the chain carries N6-(pyridoxal phosphate)lysine. Arginine 135 provides a ligand contact to substrate. Tyrosine 274 (proton acceptor; specific for L-alanine) is an active-site residue. A substrate-binding site is contributed by methionine 322.

Belongs to the alanine racemase family. It depends on pyridoxal 5'-phosphate as a cofactor.

It carries out the reaction L-alanine = D-alanine. Its pathway is amino-acid biosynthesis; D-alanine biosynthesis; D-alanine from L-alanine: step 1/1. Its function is as follows. Catalyzes the interconversion of L-alanine and D-alanine. May also act on other amino acids. The polypeptide is Alanine racemase (alr) (Desulfosudis oleivorans (strain DSM 6200 / JCM 39069 / Hxd3) (Desulfococcus oleovorans)).